The following is a 184-amino-acid chain: MIKEILKKADEKMGKSIVALKRELASMKAGRANPAMLDRIDAEYYGSMTPLNQLANISVPEARVLLIQPWDKSSMGAIEKAILKSDLGLNPSNDGTVIRLVIPELTEETRKNIVKTVKKTGEETKVAIRSIRRDCNDDVKNLKKDDVSEDDIKKTEDDIQKKTDKYIKEIDSIISAKEKEILSI.

Belongs to the RRF family.

The protein resides in the cytoplasm. Functionally, responsible for the release of ribosomes from messenger RNA at the termination of protein biosynthesis. May increase the efficiency of translation by recycling ribosomes from one round of translation to another. This is Ribosome-recycling factor from Clostridium botulinum (strain Loch Maree / Type A3).